The primary structure comprises 67 residues: Large ribosomal subunit protein bL35 (67 aa).

This sequence belongs to the bacterial ribosomal protein bL35 family.

The protein is Large ribosomal subunit protein bL35 of Allorhizobium ampelinum (strain ATCC BAA-846 / DSM 112012 / S4) (Agrobacterium vitis (strain S4)).